Reading from the N-terminus, the 96-residue chain is UPF0235 protein VC0395_A0010/VC395_0502 (96 aa).

The protein belongs to the UPF0235 family.

This is UPF0235 protein VC0395_A0010/VC395_0502 from Vibrio cholerae serotype O1 (strain ATCC 39541 / Classical Ogawa 395 / O395).